The sequence spans 92 residues: Elongation factor 1-beta (92 aa).

This sequence belongs to the EF-1-beta/EF-1-delta family.

In terms of biological role, promotes the exchange of GDP for GTP in EF-1-alpha/GDP, thus allowing the regeneration of EF-1-alpha/GTP that could then be used to form the ternary complex EF-1-alpha/GTP/AAtRNA. This chain is Elongation factor 1-beta, found in Pyrobaculum calidifontis (strain DSM 21063 / JCM 11548 / VA1).